The chain runs to 62 residues: Large ribosomal subunit protein uL30 (62 aa).

The protein belongs to the universal ribosomal protein uL30 family. In terms of assembly, part of the 50S ribosomal subunit.

This chain is Large ribosomal subunit protein uL30, found in Ruegeria pomeroyi (strain ATCC 700808 / DSM 15171 / DSS-3) (Silicibacter pomeroyi).